The primary structure comprises 369 residues: Dual-specificity RNA methyltransferase RlmN (369 aa).

Catalysis depends on Glu-96, which acts as the Proton acceptor. The Radical SAM core domain occupies 102 to 338 (DGERGTLCVS…VTTIRTTRGD (237 aa)). A disulfide bond links Cys-109 and Cys-344. [4Fe-4S] cluster is bound by residues Cys-116, Cys-120, and Cys-123. Residues 169–170 (GE), Ser-201, 223–225 (SLH), and Asn-301 contribute to the S-adenosyl-L-methionine site. Cys-344 functions as the S-methylcysteine intermediate in the catalytic mechanism.

The protein belongs to the radical SAM superfamily. RlmN family. The cofactor is [4Fe-4S] cluster.

The protein localises to the cytoplasm. The catalysed reaction is adenosine(2503) in 23S rRNA + 2 reduced [2Fe-2S]-[ferredoxin] + 2 S-adenosyl-L-methionine = 2-methyladenosine(2503) in 23S rRNA + 5'-deoxyadenosine + L-methionine + 2 oxidized [2Fe-2S]-[ferredoxin] + S-adenosyl-L-homocysteine. The enzyme catalyses adenosine(37) in tRNA + 2 reduced [2Fe-2S]-[ferredoxin] + 2 S-adenosyl-L-methionine = 2-methyladenosine(37) in tRNA + 5'-deoxyadenosine + L-methionine + 2 oxidized [2Fe-2S]-[ferredoxin] + S-adenosyl-L-homocysteine. Its function is as follows. Specifically methylates position 2 of adenine 2503 in 23S rRNA and position 2 of adenine 37 in tRNAs. m2A2503 modification seems to play a crucial role in the proofreading step occurring at the peptidyl transferase center and thus would serve to optimize ribosomal fidelity. The polypeptide is Dual-specificity RNA methyltransferase RlmN (Marinobacter nauticus (strain ATCC 700491 / DSM 11845 / VT8) (Marinobacter aquaeolei)).